The sequence spans 129 residues: Small ribosomal subunit protein uS11 (129 aa).

It belongs to the universal ribosomal protein uS11 family. Part of the 30S ribosomal subunit. Interacts with proteins S7 and S18. Binds to IF-3.

Its function is as follows. Located on the platform of the 30S subunit, it bridges several disparate RNA helices of the 16S rRNA. Forms part of the Shine-Dalgarno cleft in the 70S ribosome. The chain is Small ribosomal subunit protein uS11 from Bacteroides thetaiotaomicron (strain ATCC 29148 / DSM 2079 / JCM 5827 / CCUG 10774 / NCTC 10582 / VPI-5482 / E50).